The primary structure comprises 1440 residues: Bridge-like lipid transfer protein family member 3A (1440 aa).

In terms of domain architecture, Chorein N-terminal spans 3–95 (GIIKKQILKH…KVEVEMKTCE (93 aa)). Disordered stretches follow at residues 267 to 307 (SAHQ…NSSS), 430 to 456 (ADSLSSPRKNPLERSPSQGRQPAFQPP), and 751 to 780 (KPSASFGSPVQSEALAPDSMSHPRSKTEHD). Low complexity predominate over residues 287-307 (SAQQSWAQAFGGSQGNSNSSS). Ser444, Ser446, Ser755, and Ser758 each carry phosphoserine. Positions 837–860 (ALLRLKEVLQRLQEQLTKDTESMT) form a coiled coil. Positions 891-1008 (VDADSAGSDS…ETAVNGQGEL (118 aa)) are disordered. A compositionally biased stretch (basic and acidic residues) spans 911–920 (SEDRELKSDA). Residues 985–995 (ASSSPAALKPP) are compositionally biased toward low complexity. 3 positions are modified to phosphoserine: Ser988, Ser1103, and Ser1106. Residues 1106 to 1180 (SFDGVSLDSS…SPAANSSVSP (75 aa)) are disordered. Low complexity predominate over residues 1134-1150 (LLESESGPESVPPGSLS). The span at 1151 to 1180 (NVSDNAGVQGSPLVNNYGQGSPAANSSVSP) shows a compositional bias: polar residues. Residues 1401-1435 (KELPILQKELIETKQALANANQDKEKLLQEIRKYN) are a coiled coil.

As to quaternary structure, homodimer (Potential). Interacts with UHRF1.

The protein localises to the late endosome. Its function is as follows. Tube-forming lipid transport protein which probably mediates the transfer of lipids between membranes at organelle contact sites. May be involved in the retrograde traffic of vesicle clusters in the endocytic pathway to the Golgi complex. The sequence is that of Bridge-like lipid transfer protein family member 3A from Homo sapiens (Human).